We begin with the raw amino-acid sequence, 143 residues long: Agaricus bisporus lectin (143 aa).

Alanine 29, serine 48, glycine 49, and asparagine 73 together coordinate beta-D-Gal-(1-&gt;3)-alpha-D-GalNAc. N-acetyl-beta-D-glucosamine-binding residues include threonine 82, arginine 103, and tyrosine 114.

This sequence belongs to the fungal fruit body lectin family. Homotetramer.

In terms of biological role, lectin that recognizes O-linked galactose-beta-1,3-N-acetylgalactosamine, a disaccharide (Thomsen-Friedenreich antigen or T-disaccharide), present on cell surface glycoproteins. Can also bind galactose-beta-1,3-N-acetylglucosamine. Does not bind monosaccharides. Can be internalized by clathrin-coated vesicles after binding to surface glycoproteins. After internalization it inhibits nuclear import of nuclear localization signal dependent proteins. Inhibits proliferation of malignant cells without cytotoxicity for normal cells. This Agaricus bisporus (White button mushroom) protein is Agaricus bisporus lectin.